The following is a 430-amino-acid chain: Tektin-2 (430 aa).

Coiled coils occupy residues 82-160 and 273-379; these read LTDL…QAFE and EKVY…DIAC.

The protein belongs to the tektin family. Microtubule inner protein component of sperm flagellar doublet microtubules. May interact with CCDC172. Post-translationally, tyrosine phosphorylated. In terms of processing, ubiquitinated, leading to its degradation. Deubiquitinated by USP16, promoting its stability.

Its subcellular location is the cytoplasm. It localises to the cytoskeleton. It is found in the cilium axoneme. The protein resides in the flagellum axoneme. The protein localises to the microtubule organizing center. Its function is as follows. Microtubule inner protein (MIP) part of the dynein-decorated doublet microtubules (DMTs) in cilia and flagellar axoneme. Plays a key role in the assembly or attachment of the inner dynein arm to microtubules in sperm flagella and tracheal cilia. Forms filamentous polymers in the walls of ciliary and flagellar microtubules. This Macaca fascicularis (Crab-eating macaque) protein is Tektin-2 (TEKT2).